A 676-amino-acid chain; its full sequence is Double-stranded RNA-specific editase Adar (676 aa).

The disordered stretch occupies residues 1–51; sequence MKFDSRVMLNSANNNSPQHPVSAPSDINMNGYNRKLPQKRGYEMPKYSDPK. The segment covering 8-31 has biased composition (polar residues); that stretch reads MLNSANNNSPQHPVSAPSDINMNG. A compositionally biased stretch (basic and acidic residues) spans 40–51; it reads RGYEMPKYSDPK. DRBM domains follow at residues 61 to 127 and 197 to 272; these read QPKN…SFIQ and ITVD…SLCN. Residues 348–672 enclose the A to I editase domain; that stretch reads SVSTGTKCVS…LKKPIEQDEF (325 aa). Residue H372 coordinates Zn(2+). The Proton donor role is filled by E374. The Zn(2+) site is built by C430 and C493.

As to expression, expressed in embryonic nervous system; late stage 13 sees ventral nerve cord expression which spreads to brain by stage 16. Expression is maintained through to adulthood.

Functionally, has A-to-I RNA editing activity on extended dsRNA: edits RNA-binding protein Rnp4F. A-to-I editing of pre-mRNAs acts predominantly through nervous system targets to affect adult nervous system integrity, function and behavior. Essential for adaptation to environmental stresses, such as oxygen deprivation, and for the prevention of premature neuronal degeneration, through the editing of ion channels as targets. In Drosophila melanogaster (Fruit fly), this protein is Double-stranded RNA-specific editase Adar.